We begin with the raw amino-acid sequence, 330 residues long: ADP-L-glycero-D-manno-heptose-6-epimerase (330 aa).

Residues 11–12 (FI), 32–33 (DN), lysine 39, lysine 54, 75–79 (EGACS), and asparagine 92 contribute to the NADP(+) site. Tyrosine 139 serves as the catalytic Proton acceptor. Lysine 143 provides a ligand contact to NADP(+). Substrate is bound at residue asparagine 168. 2 residues coordinate NADP(+): valine 169 and lysine 177. Lysine 177 functions as the Proton acceptor in the catalytic mechanism. Residues arginine 179, histidine 186, 200–203 (FGEY), arginine 213, and tyrosine 292 each bind substrate.

It belongs to the NAD(P)-dependent epimerase/dehydratase family. HldD subfamily. As to quaternary structure, homopentamer. Requires NADP(+) as cofactor.

It carries out the reaction ADP-D-glycero-beta-D-manno-heptose = ADP-L-glycero-beta-D-manno-heptose. It participates in nucleotide-sugar biosynthesis; ADP-L-glycero-beta-D-manno-heptose biosynthesis; ADP-L-glycero-beta-D-manno-heptose from D-glycero-beta-D-manno-heptose 7-phosphate: step 4/4. Its function is as follows. Catalyzes the interconversion between ADP-D-glycero-beta-D-manno-heptose and ADP-L-glycero-beta-D-manno-heptose via an epimerization at carbon 6 of the heptose. The polypeptide is ADP-L-glycero-D-manno-heptose-6-epimerase (Burkholderia ambifaria (strain ATCC BAA-244 / DSM 16087 / CCUG 44356 / LMG 19182 / AMMD) (Burkholderia cepacia (strain AMMD))).